The sequence spans 438 residues: MNKIIIVGAVAGGATCASQIRRLDKESEIIVFEKDRDMSFANCALPYYIGNVIEDRRKVLAYTPNQFYDKKQITVKTYHEVIQINDERQTVTVLNHQTNQTFEESYDTLILSPGASANRLNTHSDISFTVRNLEDTETIDTFITNTKAQRALVVGAGYISLEVLENLHHRGLDVTWIHRSTNINKLMDQDMNQPIIDEIEKRNITYRFNEEISHVNGHEVTFTSGKVENFDLIIEGVGTHPNSQFIKSSNVILNDKGYIPVNHNFQTNIPNIYALGDVITSHYRHVNLPAQVPLAWGAHRGASIIAEQLSGNSSIHFKGYLGNNIVKFFDYTLASVGIKPNELKNFDYDMVEVKQGAHAGYYPGNSPLHLRVYFEKDSRKLIRAAAVGKQGADKRIDVLSMAMMNNATVDDLTEFEVAYAPPYSHPKDLINLIGYKAQ.

8–33 serves as a coordination point for FAD; the sequence is GAVAGGATCASQIRRLDKESEIIVFE. Substrate is bound by residues Thr-15, Gln-19, Arg-22, Ser-39, and Asn-42. Cys-43 functions as the Nucleophile in the catalytic mechanism. Cys-43 functions as the Redox-active in the catalytic mechanism. Lys-71 lines the substrate pocket. Residue 151–166 coordinates NADP(+); it reads ALVVGAGYISLEVLEN. 267 to 277 is a binding site for FAD; sequence TNIPNIYALGD. His-299 lines the substrate pocket. Residue Tyr-419 participates in FAD binding. Lys-427 provides a ligand contact to substrate.

It belongs to the class-III pyridine nucleotide-disulfide oxidoreductase family. As to quaternary structure, homodimer. It depends on FAD as a cofactor.

It catalyses the reaction NADP(+) + 2 CoA = CoA-disulfide + NADPH + H(+). Its function is as follows. Catalyzes specifically the NADPH-dependent reduction of coenzyme A disulfide. The sequence is that of Coenzyme A disulfide reductase from Staphylococcus epidermidis (strain ATCC 35984 / DSM 28319 / BCRC 17069 / CCUG 31568 / BM 3577 / RP62A).